We begin with the raw amino-acid sequence, 158 residues long: 2-C-methyl-D-erythritol 2,4-cyclodiphosphate synthase (158 aa).

Residues D9 and H11 each contribute to the a divalent metal cation site. Residues 9–11 (DVH) and 35–36 (HS) each bind 4-CDP-2-C-methyl-D-erythritol 2-phosphate. Residue H43 participates in a divalent metal cation binding. 4-CDP-2-C-methyl-D-erythritol 2-phosphate is bound by residues 57-59 (DIG) and R143.

The protein belongs to the IspF family. In terms of assembly, homotrimer. The cofactor is a divalent metal cation.

It catalyses the reaction 4-CDP-2-C-methyl-D-erythritol 2-phosphate = 2-C-methyl-D-erythritol 2,4-cyclic diphosphate + CMP. The protein operates within isoprenoid biosynthesis; isopentenyl diphosphate biosynthesis via DXP pathway; isopentenyl diphosphate from 1-deoxy-D-xylulose 5-phosphate: step 4/6. Functionally, involved in the biosynthesis of isopentenyl diphosphate (IPP) and dimethylallyl diphosphate (DMAPP), two major building blocks of isoprenoid compounds. Catalyzes the conversion of 4-diphosphocytidyl-2-C-methyl-D-erythritol 2-phosphate (CDP-ME2P) to 2-C-methyl-D-erythritol 2,4-cyclodiphosphate (ME-CPP) with a corresponding release of cytidine 5-monophosphate (CMP). The sequence is that of 2-C-methyl-D-erythritol 2,4-cyclodiphosphate synthase from Chromobacterium violaceum (strain ATCC 12472 / DSM 30191 / JCM 1249 / CCUG 213 / NBRC 12614 / NCIMB 9131 / NCTC 9757 / MK).